The primary structure comprises 158 residues: Protein-export protein SecB (158 aa).

Belongs to the SecB family. Homotetramer, a dimer of dimers. One homotetramer interacts with 1 SecA dimer.

Its subcellular location is the cytoplasm. One of the proteins required for the normal export of preproteins out of the cell cytoplasm. It is a molecular chaperone that binds to a subset of precursor proteins, maintaining them in a translocation-competent state. It also specifically binds to its receptor SecA. This chain is Protein-export protein SecB, found in Pectobacterium atrosepticum (strain SCRI 1043 / ATCC BAA-672) (Erwinia carotovora subsp. atroseptica).